The sequence spans 293 residues: Diaminopimelate epimerase (293 aa).

Substrate contacts are provided by N17, Q47, and N67. C76 (proton donor) is an active-site residue. Substrate contacts are provided by residues 77–78, N164, N197, and 215–216; these read GN and ER. C224 functions as the Proton acceptor in the catalytic mechanism. 225 to 226 contacts substrate; sequence GS.

Belongs to the diaminopimelate epimerase family. In terms of assembly, homodimer.

The protein localises to the cytoplasm. It carries out the reaction (2S,6S)-2,6-diaminopimelate = meso-2,6-diaminopimelate. It participates in amino-acid biosynthesis; L-lysine biosynthesis via DAP pathway; DL-2,6-diaminopimelate from LL-2,6-diaminopimelate: step 1/1. Functionally, catalyzes the stereoinversion of LL-2,6-diaminopimelate (L,L-DAP) to meso-diaminopimelate (meso-DAP), a precursor of L-lysine and an essential component of the bacterial peptidoglycan. This chain is Diaminopimelate epimerase, found in Rhodopseudomonas palustris (strain ATCC BAA-98 / CGA009).